The following is a 134-amino-acid chain: UPF0102 protein SYNW1051 (134 aa).

It belongs to the UPF0102 family.

This Parasynechococcus marenigrum (strain WH8102) protein is UPF0102 protein SYNW1051.